A 472-amino-acid polypeptide reads, in one-letter code: Argininosuccinate lyase (472 aa).

The protein belongs to the lyase 1 family. Argininosuccinate lyase subfamily.

It is found in the cytoplasm. The catalysed reaction is 2-(N(omega)-L-arginino)succinate = fumarate + L-arginine. The protein operates within amino-acid biosynthesis; L-arginine biosynthesis; L-arginine from L-ornithine and carbamoyl phosphate: step 3/3. In Polynucleobacter asymbioticus (strain DSM 18221 / CIP 109841 / QLW-P1DMWA-1) (Polynucleobacter necessarius subsp. asymbioticus), this protein is Argininosuccinate lyase.